The following is a 421-amino-acid chain: Gamma-glutamyl phosphate reductase (421 aa).

Belongs to the gamma-glutamyl phosphate reductase family.

Its subcellular location is the cytoplasm. The enzyme catalyses L-glutamate 5-semialdehyde + phosphate + NADP(+) = L-glutamyl 5-phosphate + NADPH + H(+). The protein operates within amino-acid biosynthesis; L-proline biosynthesis; L-glutamate 5-semialdehyde from L-glutamate: step 2/2. Catalyzes the NADPH-dependent reduction of L-glutamate 5-phosphate into L-glutamate 5-semialdehyde and phosphate. The product spontaneously undergoes cyclization to form 1-pyrroline-5-carboxylate. This chain is Gamma-glutamyl phosphate reductase, found in Pseudomonas syringae pv. tomato (strain ATCC BAA-871 / DC3000).